The sequence spans 205 residues: Lymphotoxin-alpha (205 aa).

The N-terminal stretch at 1–34 is a signal peptide; sequence MTPPGRLYLPRVRGTRLLFLLLGLLLALPPRAKG. In terms of domain architecture, THD spans 63–205; sequence PAAHLVGDPS…SSVFFGAFAL (143 aa). The N-linked (GlcNAc...) asparagine glycan is linked to asparagine 96. A disulfide bond links cysteine 120 and cysteine 156.

The protein belongs to the tumor necrosis factor family. Homotrimer, and heterotrimer of either two LTB and one LTA subunits or (less prevalent) two LTA and one LTB subunits. Interacts with TNFRSF14.

Its subcellular location is the secreted. The protein localises to the membrane. In terms of biological role, cytokine that in its homotrimeric form binds to TNFRSF1A/TNFR1, TNFRSF1B/TNFBR and TNFRSF14/HVEM. In its heterotrimeric form with LTB binds to TNFRSF3/LTBR. Lymphotoxin is produced by lymphocytes and is cytotoxic for a wide range of tumor cells in vitro and in vivo. The protein is Lymphotoxin-alpha (LTA) of Marmota monax (Woodchuck).